Here is a 507-residue protein sequence, read N- to C-terminus: ATP synthase subunit alpha, chloroplastic (507 aa).

170–177 (GDRQTGKT) contacts ATP.

The protein belongs to the ATPase alpha/beta chains family. As to quaternary structure, F-type ATPases have 2 components, CF(1) - the catalytic core - and CF(0) - the membrane proton channel. CF(1) has five subunits: alpha(3), beta(3), gamma(1), delta(1), epsilon(1). CF(0) has four main subunits: a, b, b' and c.

The protein localises to the plastid. The protein resides in the chloroplast thylakoid membrane. It carries out the reaction ATP + H2O + 4 H(+)(in) = ADP + phosphate + 5 H(+)(out). Functionally, produces ATP from ADP in the presence of a proton gradient across the membrane. The alpha chain is a regulatory subunit. This chain is ATP synthase subunit alpha, chloroplastic, found in Piper cenocladum (Ant piper).